The chain runs to 707 residues: Acyl-CoA ligase 891, peroxisomal (707 aa).

Ile-259 to Lys-270 serves as a coordination point for ATP. Residues Asp-525–Lys-549 form a fatty acid-binding region. Residues Ala-705–Leu-707 carry the Peroxisome targeting signal motif.

Belongs to the ATP-dependent AMP-binding enzyme family.

The protein resides in the peroxisome matrix. It carries out the reaction (4E,8E)-10-(4-hydroxy-6-methoxy-7-methyl-3-oxo-1,3-dihydro-2-benzofuran-5-yl)-4,8-dimethyldeca-4,8-dienoate + ATP + CoA = (4E,8E)-10-(4-hydroxy-6-methoxy-7-methyl-3-oxo-1,3-dihydro-2-benzofuran-5-yl)-4,8-dimethyldeca-4,8-dienoyl-CoA + AMP + diphosphate. It participates in secondary metabolite biosynthesis; terpenoid biosynthesis. Acyl-CoA ligase involved in the biosynthesis of mycophenolic acid (MPA), the first isolated antibiotic natural product in the world obtained from a culture of Penicillium brevicompactum in 1893. The peroxisomal acyl-CoA ligase 891 converts the intermediate MFDHMP-3C into MFDHMP-3C-CoA which impairs its diffusion from the peroxisome. The first step of the pathway is the synthesis of 5-methylorsellinic acid (5MOA) by the cytosolic polyketide synthase mpaC. 5MOA is then converted to the phthalide compound 5,7-dihydroxy-4,6-dimethylphthalide (DHMP) by the endoplasmic reticulum-bound cytochrome P450 monooxygenase mpaDE. MpaDE first catalyzes hydroxylation of 5-MOA to 4,6-dihydroxy-2-(hydroxymethyl)-3-methylbenzoic acid (DHMB). MpaDE then acts as a lactone synthase that catalyzes the ring closure to convert DHMB into DHMP. The next step is the prenylation of DHMP by the Golgi apparatus-associated prenyltransferase mpaA to yield farnesyl-DHMP (FDHMP). The ER-bound oxygenase mpaB then mediates the oxidative cleavage the C19-C20 double bond in FDHMP to yield FDHMP-3C via a mycophenolic aldehyde intermediate. The O-methyltransferase mpaG catalyzes the methylation of FDHMP-3C to yield MFDHMP-3C. After the cytosolic methylation of FDHMP-3C, MFDHMP-3C enters into peroxisomes probably via free diffusion due to its low molecular weight. Upon a peroxisomal CoA ligation reaction, catalyzed by a beta-oxidation component enzyme acyl-CoA ligase ACL891, MFDHMP-3C-CoA would then be restricted to peroxisomes for the following beta-oxidation pathway steps. The peroxisomal beta-oxidation machinery than converts MFDHMP-3C-CoA into MPA_CoA, via a beta-oxidation chain-shortening process. Finally mpaH acts as a peroxisomal acyl-CoA hydrolase with high substrate specificity toward MPA-CoA to release the final product MPA. The chain is Acyl-CoA ligase 891, peroxisomal from Penicillium brevicompactum.